Reading from the N-terminus, the 306-residue chain is Pantothenate kinase (306 aa).

Residue 91–98 (GSVAVGKS) participates in ATP binding.

Belongs to the prokaryotic pantothenate kinase family.

The protein resides in the cytoplasm. It carries out the reaction (R)-pantothenate + ATP = (R)-4'-phosphopantothenate + ADP + H(+). The protein operates within cofactor biosynthesis; coenzyme A biosynthesis; CoA from (R)-pantothenate: step 1/5. The polypeptide is Pantothenate kinase (Streptococcus pyogenes serotype M12 (strain MGAS2096)).